We begin with the raw amino-acid sequence, 537 residues long: Interleukin-2 receptor subunit beta (537 aa).

The first 26 residues, 1-26 (MATVDLSWRLPLYILLLLLATTWVSA), serve as a signal peptide directing secretion. Residues 27–239 (AVNDCSHLKC…FRTRPADPKE (213 aa)) are Extracellular-facing. A disulfide bridge connects residues Cys-36 and Cys-46. N-linked (GlcNAc...) asparagine glycans are attached at residues Asn-43, Asn-55, and Asn-71. An intrachain disulfide couples Cys-74 to Cys-86. A Fibronectin type-III domain is found at 135-235 (APHSLQVLHI…QPMAFRTRPA (101 aa)). An N-linked (GlcNAc...) asparagine glycan is attached at Asn-150. Positions 221–225 (WSPWS) match the WSXWS motif motif. The helical transmembrane segment at 240–267 (IFPLPWLRCLLLVLGCFFGFLSCVCVLV) threads the bilayer. Topologically, residues 268 to 537 (KCRYLGPWLK…LQAQDSAHLI (270 aa)) are cytoplasmic. A Box 1 motif motif is present at residues 280 to 288 (LKCHIPDPS). Disordered stretches follow at residues 442–466 (AYGN…SLAS) and 479–498 (ELGD…QASV). Over residues 487 to 497 (MSTNSSGQQAS) the composition is skewed to polar residues.

Belongs to the type I cytokine receptor family. Type 4 subfamily. Non-covalent dimer of an alpha and a beta subunit. IL2R exists in 3 different forms: a high affinity dimer, an intermediate affinity monomer (beta subunit), and a low affinity monomer (alpha subunit). The high and intermediate affinity forms also associate with a gamma subunit. Interacts with SHB upon interleukin stimulation.

The protein localises to the cell membrane. Its subcellular location is the cell surface. In terms of biological role, receptor for interleukin-2. This beta subunit is involved in receptor mediated endocytosis and transduces the mitogenic signals of IL2. Probably in association with IL15RA, involved in the stimulation of neutrophil phagocytosis by IL15. The chain is Interleukin-2 receptor subunit beta (Il2rb) from Rattus norvegicus (Rat).